A 1031-amino-acid chain; its full sequence is Exportin-T (1031 aa).

This sequence belongs to the exportin family.

It is found in the nucleus. Its subcellular location is the cytoplasm. Functionally, tRNA nucleus export receptor which facilitates tRNA translocation across the nuclear pore complex. Involved in pre-tRNA splicing, probably by affecting the interaction of pre-tRNA with splicing endonuclease. This is Exportin-T (los1) from Emericella nidulans (strain FGSC A4 / ATCC 38163 / CBS 112.46 / NRRL 194 / M139) (Aspergillus nidulans).